The chain runs to 117 residues: Large ribosomal subunit protein bL20 (117 aa).

This sequence belongs to the bacterial ribosomal protein bL20 family.

Functionally, binds directly to 23S ribosomal RNA and is necessary for the in vitro assembly process of the 50S ribosomal subunit. It is not involved in the protein synthesizing functions of that subunit. This is Large ribosomal subunit protein bL20 from Solidesulfovibrio magneticus (strain ATCC 700980 / DSM 13731 / RS-1) (Desulfovibrio magneticus).